Here is a 780-residue protein sequence, read N- to C-terminus: METPPEMPSTDGHTRAIVTERYVVESKKSAAHVPLACSTQHCAFPLDGSRLCVWSSKDPSHQLLTLQGHHQLITAVVFGNQIDPLLLCSASEDYIIMWNVAECREKTLKGLTPRGTILGSLLQTVLCLRFSLDDRAIAVCAGNKISVMDVEKQSVLVELKGHQGSVTAVEFCPWQAHTLISVSEDRSFKVWDFCVGSLIYSSSILTAYPLLNLLINEENQQLVTGSADGQLWIFSLMEGHHYHCVAHVDVRKKRETFTTRRMMAEQCSLPEDHQCRCRHEADKRGEAEATFPILSLAPCDLCLPDSQRGAFASECTKCLWIGSSTALFILNLASFELEAALHFKEFQSLSVQVAGSCAMVSEPMSAKAFCMLSSMFGSKIAVLEIDLAALLSTQQYPRAGKVLSVLASSCVLPTSPLYFGIIKEKFPKLANTKQHAVKSVVEDRPLVFHTKVRSSGYTLAPHMAMFSPKTNIKHHNKRSSKYKNNYKCKECSLENFLPRNLSRQVAVAQKPVAVSCLQFSGDGQKLACGLGNHLSLVFNASLSGPPAAFSGHDGAVSTICWSHDKRWLLSTGRDRTLRVWSVHRTELMLLLAPDAFPKPVTSAQFYYMDTFILLSSGPEFCLLKYHIDLCRDDIRRYKPKSRYKPIFRLPMTSGADITSLSAVNDFYSHIVLTAGRDRAVEVFDLNAGCSAAVLAEVHSRPVHRICQNKGSSFVAQHSLAYNLFLTAAVGDGIRLWDLRNLRLMCMKWAPAAFCTVLQDTQIRLLKWPSTQQLLSLSQPP.

WD repeat units lie at residues 3–56 (TPPE…VWSS), 61–100 (HQLL…MWNV), 111–150 (LTPR…VMDV), 154–193 (SVLV…VWDF), 200–236 (YSSS…IFSL), 291–335 (FPIL…LASF), 342–385 (HFKE…VLEI), 500–540 (NLSR…VFNA), 544–582 (GPPA…VWSV), 588–639 (MLLL…RYKP), 644–685 (KPIF…VFDL), 691–738 (AAVL…LWDL), and 752–779 (AFCT…LSQP).

This chain is WD repeat-containing protein 27 (Wdr27), found in Mus musculus (Mouse).